The following is a 570-amino-acid chain: MGSSGGPLYIGFDLSTQQLKGLVVSSDLKVVHIAKFDFDSDSKGFNISKGVLTNEDEGEVFAPVAMWLQALDAVLQDLKHQGLDFSLVRGISGAGQQHGSVYWNESAEEILGGLDGGKTLEDQLQQALSYPYSPNWQDSSTQRECDEFDAFLGSEEELARVTGSKAHHILRFQRKHPDAYRKTSRISLVSSFLASIFLGSVAPFDISDVCGMNLWDMPMNRWNERLLKLCAGEAGPEELKKKLGDVPHDGGQELGKISSYFAKRYSFHPDCAITPSTGDNPATILALPLRPLDAMVSLGTSTTFLMSTPQYKPDPSTHFFNHPTTPGLYMFMLCYKNGGLAREQVRDAINATSGEKTDPSNPWSNFDRVLLETPPGGQKAGSGPMKMGLFFPRPEIVPNLGEGEWHFNYTPGQANEELKETDEGWTHPRDDARAIVESQFLSLRLRSKELVHSPSGGVPPQPRRIYLVGGGSRNAAIAKVAGEVLGGIEGVYKLDVGENACALGAAYKAVWALERAPDQTFEDLIGRRWREDEFVEKIADGFQPDIFEKYRQAVQGFEKMEKQVLMEAKQ.

Residues His98, Asp279, and Asn280 each contribute to the substrate site. Residues Trp363, 470-471, and Asn474 contribute to the ATP site; that span reads GG.

It belongs to the FGGY kinase family.

The protein resides in the cytoplasm. The enzyme catalyses D-xylulose + ATP = D-xylulose 5-phosphate + ADP + H(+). Highly specific D-xylulose kinase which participates in the catabolism of xylose. Xylose is a major component of hemicelluloses such as xylan. Most fungi utilize D-xylose via three enzymatic reactions, xylose reductase (XR), xylitol dehydrogenase (XDH), and xylulokinase, to form xylulose 5-phosphate, which enters pentose phosphate pathway. The polypeptide is Probable D-xylulose kinase A (xkiA) (Arthroderma otae (strain ATCC MYA-4605 / CBS 113480) (Microsporum canis)).